A 702-amino-acid polypeptide reads, in one-letter code: Polyribonucleotide nucleotidyltransferase (702 aa).

2 residues coordinate Mg(2+): Asp-485 and Asp-491. The KH domain maps to 552–611 (PRITTLKINPEKIRDVIGKGGATIRALTEETGTTIELEDDGTVKIASANGEATKEAIRRI). Positions 621 to 689 (GTVYNGKVVR…RQGRVRLSMK (69 aa)) constitute an S1 motif domain.

Belongs to the polyribonucleotide nucleotidyltransferase family. Component of the RNA degradosome, which is a multiprotein complex involved in RNA processing and mRNA degradation. Requires Mg(2+) as cofactor.

The protein localises to the cytoplasm. It carries out the reaction RNA(n+1) + phosphate = RNA(n) + a ribonucleoside 5'-diphosphate. In terms of biological role, involved in mRNA degradation. Catalyzes the phosphorolysis of single-stranded polyribonucleotides processively in the 3'- to 5'-direction. This is Polyribonucleotide nucleotidyltransferase from Shewanella woodyi (strain ATCC 51908 / MS32).